The primary structure comprises 435 residues: Xylose isomerase (435 aa).

Active-site residues include H100 and D103. Residues E231, E267, H270, D295, D306, D308, and D338 each coordinate Mg(2+).

The protein belongs to the xylose isomerase family. As to quaternary structure, homotetramer. The cofactor is Mg(2+).

It localises to the cytoplasm. The enzyme catalyses alpha-D-xylose = alpha-D-xylulofuranose. The protein is Xylose isomerase of Brucella suis (strain ATCC 23445 / NCTC 10510).